Reading from the N-terminus, the 163-residue chain is Transcriptional repressor NrdR (163 aa).

A zinc finger lies at 3 to 34; that stretch reads CPFCAYADTRVVDSRLADDGGSVRRRRECPQC. The ATP-cone domain maps to 49–139; the sequence is PVVVKTDGRR…VYRRFEDVDA (91 aa).

Belongs to the NrdR family. Requires Zn(2+) as cofactor.

Functionally, negatively regulates transcription of bacterial ribonucleotide reductase nrd genes and operons by binding to NrdR-boxes. The sequence is that of Transcriptional repressor NrdR from Acidithiobacillus ferrooxidans (strain ATCC 23270 / DSM 14882 / CIP 104768 / NCIMB 8455) (Ferrobacillus ferrooxidans (strain ATCC 23270)).